The primary structure comprises 371 residues: Pyruvate dehydrogenase E1 component subunit alpha (371 aa).

In terms of assembly, heterodimer of an alpha and a beta chain. Thiamine diphosphate serves as cofactor.

It catalyses the reaction N(6)-[(R)-lipoyl]-L-lysyl-[protein] + pyruvate + H(+) = N(6)-[(R)-S(8)-acetyldihydrolipoyl]-L-lysyl-[protein] + CO2. Activity of the E1 module is inhibited by the pyruvate dehydrogenase inhibitor PdhI. Functionally, the pyruvate dehydrogenase complex catalyzes the overall conversion of pyruvate to acetyl-CoA and CO(2). It contains multiple copies of three enzymatic components: pyruvate dehydrogenase (E1), dihydrolipoamide acetyltransferase (E2) and lipoamide dehydrogenase (E3). In terms of biological role, the B.subtilis PDH complex also possesses branched-chain 2-oxoacid dehydrogenase (BCDH) activity. This is Pyruvate dehydrogenase E1 component subunit alpha from Bacillus subtilis (strain 168).